The chain runs to 529 residues: Tyrosine-protein kinase Fgr (529 aa).

A lipid anchor (N-myristoyl glycine) is attached at glycine 2. Residues cysteine 3 and cysteine 6 are each lipidated (S-palmitoyl cysteine). Phosphotyrosine is present on tyrosine 34. The 62-residue stretch at 77 to 138 (IGVTLFIALY…PSNYVAPVDS (62 aa)) folds into the SH3 domain. Residues 144 to 241 (WYFGKIGRKD…GLCNLLIAPC (98 aa)) enclose the SH2 domain. Residue tyrosine 208 is modified to Phosphotyrosine. Serine 218 carries the post-translational modification Phosphoserine. The region spanning 263 to 516 (ITLERRLGTG…YLQSFLEDYF (254 aa)) is the Protein kinase domain. Residues 269–277 (LGTGCFGDV) and lysine 291 each bind ATP. Catalysis depends on aspartate 382, which acts as the Proton acceptor. Tyrosine 412 carries the post-translational modification Phosphotyrosine. Tyrosine 523 carries the post-translational modification Phosphotyrosine; by SRC.

It belongs to the protein kinase superfamily. Tyr protein kinase family. SRC subfamily. In terms of assembly, interacts with ITGB1, ITGB2, MS4A2/FCER1B, FCER1G, FCGR2A and/or FCGR2B. Interacts (via SH2 domain) with SYK (tyrosine phosphorylated). Interacts (via SH2 domain) with FLT3 (tyrosine phosphorylated). Interacts with PTK2/FAK1. Interacts (via SH2 domain) with HCLS1 (tyrosine phosphorylated by SYK). Interacts with SIRPA and PTPNS1. Interacts (not phosphorylated on tyrosine residues) with CBL; FGR tyrosine phosphorylation promotes dissociation. Interacts with PIK3R1 and FASLG. Interacts with CLNK. Post-translationally, ubiquitinated. Becomes ubiquitinated in response to ITGB2 signaling; this does not lead to degradation. In terms of processing, phosphorylated. Autophosphorylated on tyrosine residues. Becomes phosphorylated in response to FCGR2A and/or FCGR2B engagement, cell adhesion and signaling by ITGB2. Prior phosphorylation at Tyr-523 by SRC inhibits ulterior autophosphorylation at Tyr-412. In terms of tissue distribution, detected in neutrophils, monocytes and natural killer cells (at protein level). Detected in monocytes and large lymphocytes.

It localises to the cell membrane. It is found in the cell projection. Its subcellular location is the ruffle membrane. The protein resides in the cytoplasm. The protein localises to the cytosol. It localises to the cytoskeleton. It is found in the mitochondrion inner membrane. Its subcellular location is the mitochondrion intermembrane space. The enzyme catalyses L-tyrosyl-[protein] + ATP = O-phospho-L-tyrosyl-[protein] + ADP + H(+). With respect to regulation, activated by autophosphorylation. Prior phosphorylation at Tyr-523 by SRC inhibits ulterior autophosphorylation at Tyr-412. Activated by phorbol myristate acetate, phosphatidic acid and poly-Lys. Binding (via SH2 domain) of HCLS1 that is already phosphorylated by SYK strongly increases kinase activity. Its function is as follows. Non-receptor tyrosine-protein kinase that transmits signals from cell surface receptors devoid of kinase activity and contributes to the regulation of immune responses, including neutrophil, monocyte, macrophage and mast cell functions, cytoskeleton remodeling in response to extracellular stimuli, phagocytosis, cell adhesion and migration. Promotes mast cell degranulation, release of inflammatory cytokines and IgE-mediated anaphylaxis. Acts downstream of receptors that bind the Fc region of immunoglobulins, such as MS4A2/FCER1B, FCGR2A and/or FCGR2B. Acts downstream of ITGB1 and ITGB2, and regulates actin cytoskeleton reorganization, cell spreading and adhesion. Depending on the context, activates or inhibits cellular responses. Functions as a negative regulator of ITGB2 signaling, phagocytosis and SYK activity in monocytes. Required for normal ITGB1 and ITGB2 signaling, normal cell spreading and adhesion in neutrophils and macrophages. Functions as a positive regulator of cell migration and regulates cytoskeleton reorganization via RAC1 activation. Phosphorylates SYK (in vitro) and promotes SYK-dependent activation of AKT1 and MAP kinase signaling. Phosphorylates PLD2 in antigen-stimulated mast cells, leading to PLD2 activation and the production of the signaling molecules lysophosphatidic acid and diacylglycerol. Promotes activation of PIK3R1. Phosphorylates FASLG, and thereby regulates its ubiquitination and subsequent internalization. Phosphorylates ABL1. Promotes phosphorylation of CBL, CTTN, PIK3R1, PTK2/FAK1, PTK2B/PYK2 and VAV2. Phosphorylates HCLS1 that has already been phosphorylated by SYK, but not unphosphorylated HCLS1. Together with CLNK, it acts as a negative regulator of natural killer cell-activating receptors and inhibits interferon-gamma production. The protein is Tyrosine-protein kinase Fgr (FGR) of Homo sapiens (Human).